We begin with the raw amino-acid sequence, 83 residues long: Sec-independent protein translocase protein TatA (83 aa).

The chain crosses the membrane as a helical span at residues 1–21; that stretch reads MGGLSLPHLIVLALVVLILFG. A disordered region spans residues 34 to 83; that stretch reads KGIKSFKQGMNDEDSKPVTPPPAQIPPASLQQTPPPAQPAPQPTSTDQAQ. The segment covering 66–75 has biased composition (pro residues); sequence TPPPAQPAPQ.

This sequence belongs to the TatA/E family. The Tat system comprises two distinct complexes: a TatABC complex, containing multiple copies of TatA, TatB and TatC subunits, and a separate TatA complex, containing only TatA subunits. Substrates initially bind to the TatABC complex, which probably triggers association of the separate TatA complex to form the active translocon.

The protein resides in the cell inner membrane. Functionally, part of the twin-arginine translocation (Tat) system that transports large folded proteins containing a characteristic twin-arginine motif in their signal peptide across membranes. TatA could form the protein-conducting channel of the Tat system. This Novosphingobium aromaticivorans (strain ATCC 700278 / DSM 12444 / CCUG 56034 / CIP 105152 / NBRC 16084 / F199) protein is Sec-independent protein translocase protein TatA.